Here is a 442-residue protein sequence, read N- to C-terminus: 3-phosphoshikimate 1-carboxyvinyltransferase (442 aa).

Positions 27, 28, and 32 each coordinate 3-phosphoshikimate. K27 contacts phosphoenolpyruvate. Residues G100 and R128 each coordinate phosphoenolpyruvate. 3-phosphoshikimate contacts are provided by S174, S175, Q176, S204, D321, and K348. Position 176 (Q176) interacts with phosphoenolpyruvate. The active-site Proton acceptor is D321. Phosphoenolpyruvate contacts are provided by R352, R394, and K424.

This sequence belongs to the EPSP synthase family. Monomer.

The protein resides in the cytoplasm. It catalyses the reaction 3-phosphoshikimate + phosphoenolpyruvate = 5-O-(1-carboxyvinyl)-3-phosphoshikimate + phosphate. Its pathway is metabolic intermediate biosynthesis; chorismate biosynthesis; chorismate from D-erythrose 4-phosphate and phosphoenolpyruvate: step 6/7. In terms of biological role, catalyzes the transfer of the enolpyruvyl moiety of phosphoenolpyruvate (PEP) to the 5-hydroxyl of shikimate-3-phosphate (S3P) to produce enolpyruvyl shikimate-3-phosphate and inorganic phosphate. This chain is 3-phosphoshikimate 1-carboxyvinyltransferase, found in Herminiimonas arsenicoxydans.